Here is a 465-residue protein sequence, read N- to C-terminus: D-ornithine/D-lysine decarboxylase (465 aa).

Lys80 is subject to N6-(pyridoxal phosphate)lysine. Pyridoxal 5'-phosphate-binding positions include Gly259 and 307 to 310; that span reads EPGR. Catalysis depends on Cys387, which acts as the Proton donor. Residue Tyr422 participates in pyridoxal 5'-phosphate binding.

This sequence belongs to the Orn/Lys/Arg decarboxylase class-II family. Homodimer. Requires pyridoxal 5'-phosphate as cofactor.

It catalyses the reaction D-ornithine + H(+) = putrescine + CO2. It carries out the reaction D-lysine + H(+) = cadaverine + CO2. In terms of biological role, catalyzes the decarboxylation of D-ornithine and D-lysine. Ornithine is likely the physiological substrate. Has no detectable diaminopimelate decarboxylase activity in vitro. In Salmonella typhimurium (strain LT2 / SGSC1412 / ATCC 700720), this protein is D-ornithine/D-lysine decarboxylase.